The sequence spans 411 residues: MSQKSDLRNRIIFTLFLLVLARLGIFIPVPGIDHDAFYASVEKNTLVNFLNIFSGGGFSTIGIFALGIVPYINSSIVMQLLTKIVPNLEKLQKEEGELGRQKITQITRYLALGWATLQSGAISIWVKPYVFNWNFAFVCESVLALTAGSMIIMWLSELITEKGIGNGASLLIFQNIVSGLPKNFTQSFFDASYSNASLKFGLFIAIFLLMIIITICVQEGTRRIKIISARQLGKSSILDPNSYLPLKLNQGGVMPIVFASASMALPSYLTQIIQNKTLLQILYLFCPNGSLYLLLYCALILFFSYFYTSIVMNPEDIAINLKKMGASIPNIRPGQATIDYLQVILNRLTFLGASFLFTVALIPFIIEKVTQIQNLRGLGATSLLILVGVAIDTAKQIQTYVISKKYDSMTK.

10 consecutive transmembrane segments (helical) span residues 11–31 (IIFT…PVPG), 52–72 (IFSG…VPYI), 111–131 (ALGW…PYVF), 135–155 (FAFV…IMWL), 163–180 (GIGN…VSGL), 197–217 (SLKF…TICV), 253–273 (VMPI…TQII), 291–311 (LYLL…TSIV), 349–369 (TFLG…IEKV), and 377–397 (GLGA…AKQI).

This sequence belongs to the SecY/SEC61-alpha family. Component of the plastid Sec protein translocase complex, which is composed of at least SecY, SecE and SecG.

The protein localises to the plastid. Its subcellular location is the chloroplast thylakoid membrane. In terms of biological role, the central subunit of the protein translocation channel SecYE. Consists of two halves formed by TMs 1-5 and 6-10. These two domains form a lateral gate at the front which open onto the bilayer between TMs 2 and 7, and are clamped together by SecE at the back. The channel is closed by both a pore ring composed of hydrophobic SecY resides and a short helix (helix 2A) on the extracellular side of the membrane which forms a plug. The protein is Protein translocase subunit SecY of Pyropia yezoensis (Susabi-nori).